A 405-amino-acid polypeptide reads, in one-letter code: Deoxyguanosinetriphosphate triphosphohydrolase-like protein (405 aa).

Positions 75-219 constitute an HD domain; it reads RLTHTIEVAQ…AAIADDIAYN (145 aa).

The protein belongs to the dGTPase family. Type 2 subfamily.

The protein is Deoxyguanosinetriphosphate triphosphohydrolase-like protein of Rhizobium leguminosarum bv. trifolii (strain WSM2304).